Here is a 128-residue protein sequence, read N- to C-terminus: Sulfurtransferase TusD (128 aa).

Cysteine 78 (cysteine persulfide intermediate) is an active-site residue.

The protein belongs to the DsrE/TusD family. Heterohexamer, formed by a dimer of trimers. The hexameric TusBCD complex contains 2 copies each of TusB, TusC and TusD. The TusBCD complex interacts with TusE.

It is found in the cytoplasm. In terms of biological role, part of a sulfur-relay system required for 2-thiolation of 5-methylaminomethyl-2-thiouridine (mnm(5)s(2)U) at tRNA wobble positions. Accepts sulfur from TusA and transfers it in turn to TusE. This is Sulfurtransferase TusD from Buchnera aphidicola subsp. Schizaphis graminum (strain Sg).